Reading from the N-terminus, the 353-residue chain is Methylthioribose-1-phosphate isomerase (353 aa).

Substrate is bound by residues 51–53, Arg-94, and Gln-203; that span reads RGA. Catalysis depends on Asp-244, which acts as the Proton donor. 254-255 contributes to the substrate binding site; that stretch reads NK.

This sequence belongs to the eIF-2B alpha/beta/delta subunits family. MtnA subfamily.

It carries out the reaction 5-(methylsulfanyl)-alpha-D-ribose 1-phosphate = 5-(methylsulfanyl)-D-ribulose 1-phosphate. It participates in amino-acid biosynthesis; L-methionine biosynthesis via salvage pathway; L-methionine from S-methyl-5-thio-alpha-D-ribose 1-phosphate: step 1/6. Catalyzes the interconversion of methylthioribose-1-phosphate (MTR-1-P) into methylthioribulose-1-phosphate (MTRu-1-P). This chain is Methylthioribose-1-phosphate isomerase, found in Trichodesmium erythraeum (strain IMS101).